The sequence spans 306 residues: TnpB-like protein aq_aa05 (306 aa).

Zn(2+)-binding residues include Cys-213, Cys-216, Cys-234, and Cys-237.

It belongs to the transposase 35 family.

The polypeptide is TnpB-like protein aq_aa05 (Aquifex aeolicus (strain VF5)).